The sequence spans 841 residues: Neuronal tyrosine-phosphorylated phosphoinositide-3-kinase adapter 1 (841 aa).

Disordered stretches follow at residues 1 to 45 (MNLL…PGVR), 64 to 448 (PASQ…PAAL), 655 to 679 (RAWN…TSGI), 745 to 769 (RPCS…PLPP), and 812 to 833 (LPSW…RRQH). Residues 8-25 (TKLEWRQHKEEEAKRSSS) show a composition bias toward basic and acidic residues. A compositionally biased stretch (low complexity) spans 26-39 (KEVAPAGSAGPAAG). The segment at 76–186 (SAMAPRSLSC…DESCPPGPSP (111 aa)) is involved in CYFIP1- and NCKAP1-binding. The span at 94 to 103 (VGGGPGGASG) shows a compositional bias: gly residues. The segment covering 114–123 (PPAKPRRHPS) has biased composition (basic residues). Polar residues predominate over residues 167–176 (SPNTQLSVSF). Residues 224 to 243 (FRGGGRSGGGLAGPPLGGGG) show a composition bias toward gly residues. Over residues 252–261 (SDSEESEAIY) the composition is skewed to acidic residues. Residues 279-295 (GPPPLTATSPPQQPHAL) show a composition bias toward pro residues. Pro residues predominate over residues 759-769 (PALPLPLPLPP).

Belongs to the NYAP family. In terms of assembly, interacts with ACOT9, ARHGAP26 and PIK3R2. Interacts with components of the WAVE1 complex, CYFIP1 and NCKAP1; this interaction mediates PI3K-WAVE1 association and actin cytoskeleton remodeling. In terms of processing, phosphorylated on tyrosine residues by FYN upon stimulation with CNTN5.

In terms of biological role, activates PI3K and concomitantly recruits the WAVE1 complex to the close vicinity of PI3K and regulates neuronal morphogenesis. The sequence is that of Neuronal tyrosine-phosphorylated phosphoinositide-3-kinase adapter 1 (NYAP1) from Homo sapiens (Human).